A 302-amino-acid polypeptide reads, in one-letter code: Aliphatic sulfonates import ATP-binding protein SsuB (302 aa).

Residues 30–57 (PATADAQHTADAQHTADAQHTADAQHTA) are compositionally biased toward low complexity. The segment at 30–65 (PATADAQHTADAQHTADAQHTADAQHTAETAETRGA) is disordered. In terms of domain architecture, ABC transporter spans 70–284 (IRIRGLRRTF…RRTDPAFDRL (215 aa)). Residue 102–109 (GRSGSGKS) coordinates ATP.

The protein belongs to the ABC transporter superfamily. Aliphatic sulfonates importer (TC 3.A.1.17.2) family. The complex is composed of two ATP-binding proteins (SsuB), two transmembrane proteins (SsuC) and a solute-binding protein (SsuA).

Its subcellular location is the cell membrane. The enzyme catalyses ATP + H2O + aliphatic sulfonate-[sulfonate-binding protein]Side 1 = ADP + phosphate + aliphatic sulfonateSide 2 + [sulfonate-binding protein]Side 1.. In terms of biological role, part of the ABC transporter complex SsuABC involved in aliphatic sulfonates import. Responsible for energy coupling to the transport system. The sequence is that of Aliphatic sulfonates import ATP-binding protein SsuB from Frankia casuarinae (strain DSM 45818 / CECT 9043 / HFP020203 / CcI3).